Reading from the N-terminus, the 303-residue chain is Trans-enoyl reductase tazE (303 aa).

Residues 1-26 (MTAEHDAAILPKPGGPLAVGKRATPE) form a disordered region. NADP(+) is bound at residue 44-49 (CDYYQR). Substrate is bound at residue 136 to 143 (LAVLTALT). NADP(+) contacts are provided by residues 170–173 (SSSV), 193–196 (SPKH), Tyr-211, and 246–247 (LD). 265–269 (VLPEC) contacts substrate.

This sequence belongs to the zinc-containing alcohol dehydrogenase family.

The protein operates within secondary metabolite biosynthesis. In terms of biological role, trans-enoyl reductase; part of the gene cluster that mediates the biosynthesis of azaterrilone A and other azaphilones, a class of fungal metabolites characterized by a highly oxygenated pyrano-quinone bicyclic core and exhibiting a broad range of bioactivities. The first step of the pathway begins with the non-reducing polyketide synthase tazA that assembles one acetyl-CoA starter unit, five malonyl-CoA units, and catalyzes a series of Claisen condensations, methylation, PT-mediated cyclization, and finally releases the first hexaketide precursor through the R-domain. The tazA product then undergoes reduction on its terminal ketone and the following pyran-ring formation by yet undetermined enzyme(s). Dehydration and enoyl reduction, possibly involving the trans-enoyl reductase tazE leads to the next intermediate. TazD is predicted as an acetyltransferase and might catalyze the acetylation steps leading to the synthesis of azaterrilone A. Azaterrilone A is not the final product of the taz pathway and both the highly reducing polyketide synthase tazB and the dual enzyme tazHJ catalyze late steps of the pathway, leading to the production of the 2 final stereoisomers that contain additional polyketide modification whose structures have still to be determined. The polypeptide is Trans-enoyl reductase tazE (Aspergillus terreus (strain NIH 2624 / FGSC A1156)).